The chain runs to 179 residues: Large ribosomal subunit protein uL5 (179 aa).

Belongs to the universal ribosomal protein uL5 family. As to quaternary structure, part of the 50S ribosomal subunit; part of the 5S rRNA/L5/L18/L25 subcomplex. Contacts the 5S rRNA and the P site tRNA. Forms a bridge to the 30S subunit in the 70S ribosome.

In terms of biological role, this is one of the proteins that bind and probably mediate the attachment of the 5S RNA into the large ribosomal subunit, where it forms part of the central protuberance. In the 70S ribosome it contacts protein S13 of the 30S subunit (bridge B1b), connecting the 2 subunits; this bridge is implicated in subunit movement. Contacts the P site tRNA; the 5S rRNA and some of its associated proteins might help stabilize positioning of ribosome-bound tRNAs. The chain is Large ribosomal subunit protein uL5 from Bordetella avium (strain 197N).